The primary structure comprises 613 residues: Glutathione S-transferase C-terminal domain-containing protein (613 aa).

The GST C-terminal domain occupies 116–312 (LGFKKTCLKA…QQVPGVRFAA (197 aa)).

It belongs to the GSTCD family.

It localises to the cytoplasm. The polypeptide is Glutathione S-transferase C-terminal domain-containing protein (gstcd) (Xenopus laevis (African clawed frog)).